Consider the following 617-residue polypeptide: tRNA-dihydrouridine(47) synthase [NAD(P)(+)] (617 aa).

The segment at 42-70 adopts a C3H1-type zinc-finger fold; sequence KENNALCPAISIGNECPYKENCKFPHDVE. A disordered region spans residues 160–193; that stretch reads EEKPDPSSKVSNIPEENRDATSAISEGKETESVS. FMN contacts are provided by residues 245–247 and Gln-308; that span reads PLT. Cys-340 acts as the Proton donor in catalysis. FMN is bound by residues Lys-380, His-411, 460–462, and 483–484; these read NGD and AR.

This sequence belongs to the Dus family. Dus3 subfamily. It depends on FMN as a cofactor.

Its subcellular location is the cytoplasm. It localises to the nucleus. The catalysed reaction is 5,6-dihydrouridine(47) in tRNA + NAD(+) = uridine(47) in tRNA + NADH + H(+). It carries out the reaction 5,6-dihydrouridine(47) in tRNA + NADP(+) = uridine(47) in tRNA + NADPH + H(+). It catalyses the reaction a 5,6-dihydrouridine in mRNA + NAD(+) = a uridine in mRNA + NADH + H(+). The enzyme catalyses a 5,6-dihydrouridine in mRNA + NADP(+) = a uridine in mRNA + NADPH + H(+). Its function is as follows. Catalyzes the synthesis of dihydrouridine, a modified base, in various RNAs, such as tRNAs and mRNAs. Modifies the uridine in position 47 (U47) in the D-loop of tRNAs. Also able to mediate formation of dihydrouridine outside of the D-loop of tRNAs. Catalyzes the synthesis of dihydrouridine in some mRNAs, thereby affecting their translation. Dus3-mediated dihydrouridylation of the mRNA encoding alpha-tubulin nda2 is required for meiotic chromosome segregation. The chain is tRNA-dihydrouridine(47) synthase [NAD(P)(+)] from Schizosaccharomyces pombe (strain 972 / ATCC 24843) (Fission yeast).